The primary structure comprises 600 residues: CDK5RAP1-like protein (600 aa).

Residues 45–66 are disordered; it reads LSSAAHPPPPPPRRLARSGPSR. An MTTase N-terminal domain is found at 93 to 222; that stretch reads GRIYHETYGC…LPRLLQEVDY (130 aa). [4Fe-4S] cluster-binding residues include cysteine 102, cysteine 139, cysteine 185, cysteine 260, cysteine 264, and cysteine 267. In terms of domain architecture, Radical SAM core spans 246–501; it reads SDNSVTAFVS…ISTFRETTAK (256 aa). The 77-residue stretch at 504-580 folds into the TRAM domain; it reads DSQVGTVQLV…TASLSGDVIA (77 aa).

The protein belongs to the methylthiotransferase family. MiaB subfamily. It depends on [4Fe-4S] cluster as a cofactor.

Its function is as follows. Potential regulator of CDK5 activity. The sequence is that of CDK5RAP1-like protein from Oryza sativa subsp. japonica (Rice).